The following is a 269-amino-acid chain: Shikimate dehydrogenase (NADP(+)) (269 aa).

Shikimate is bound by residues 17-19 and Thr64; that span reads SKS. Residue Lys68 is the Proton acceptor of the active site. An NADP(+)-binding site is contributed by Asp80. The shikimate site is built by Asn89 and Asp105. Residues 130–134, 154–159, and Met213 each bind NADP(+); these read GAGGA and NRTRAK. Tyr215 serves as a coordination point for shikimate. NADP(+) is bound at residue Gly237.

It belongs to the shikimate dehydrogenase family. In terms of assembly, homodimer.

The catalysed reaction is shikimate + NADP(+) = 3-dehydroshikimate + NADPH + H(+). The protein operates within metabolic intermediate biosynthesis; chorismate biosynthesis; chorismate from D-erythrose 4-phosphate and phosphoenolpyruvate: step 4/7. Involved in the biosynthesis of the chorismate, which leads to the biosynthesis of aromatic amino acids. Catalyzes the reversible NADPH linked reduction of 3-dehydroshikimate (DHSA) to yield shikimate (SA). This Neisseria gonorrhoeae (strain ATCC 700825 / FA 1090) protein is Shikimate dehydrogenase (NADP(+)).